The sequence spans 727 residues: Sodium-dependent neutral amino acid transporter SLC6A17 (727 aa).

Residues 1-68 are Cytoplasmic-facing; that stretch reads MPKNSKVTQR…DRPAWNSKLQ (68 aa). Phosphoserine occurs at positions 13 and 20. Residues 69–89 form a helical membrane-spanning segment; that stretch reads YILAQIGFSVGLGNIWRFPYL. Over 90 to 96 the chain is Extracellular; it reads CQKNGGG. Residues 97–116 traverse the membrane as a helical segment; it reads AYLVPYLVLLIIIGIPLFFL. The Cytoplasmic segment spans residues 117-140; the sequence is ELAVGQRIRRGSIGVWHYVCPRLG. A helical membrane pass occupies residues 141–161; the sequence is GIGFSSCIVCLFVGLYYNVII. At 162-224 the chain is on the extracellular side; that stretch reads GWSVFYFFKS…NSISESGGLN (63 aa). The N-linked (GlcNAc...) asparagine glycan is linked to Asn-186. A helical transmembrane segment spans residues 225 to 243; that stretch reads WKMTLCLLVAWSIVGMAVV. Residues 244–251 are Cytoplasmic-facing; the sequence is KGIQSSGK. The helical transmembrane segment at 252–269 threads the bilayer; that stretch reads VMYFSSLFPYVVLACFLV. Residues 270 to 304 are Extracellular-facing; it reads RGLLLRGAVDGILHMFTPKLDKMLDPQVWREAATQ. A helical membrane pass occupies residues 305 to 322; that stretch reads VFFALGLGFGGVIAFSSY. Residues 323–333 lie on the Cytoplasmic side of the membrane; that stretch reads NKQDNNCHFDA. The helical transmembrane segment at 334–355 threads the bilayer; sequence ALVSFINFFTSVLATLVVFAVL. At 356-451 the chain is on the extracellular side; sequence GFKANIMNEK…FIAFTEAMTH (96 aa). A Phosphotyrosine modification is found at Tyr-377. N-linked (GlcNAc...) asparagine glycosylation is present at Asn-393. Residues 452-471 form a helical membrane-spanning segment; sequence FPASPFWSVMFFLMLINLGL. At 472–494 the chain is on the cytoplasmic side; the sequence is GSMIGTMAGITTPIIDTFKVPKE. The chain crosses the membrane as a helical span at residues 495 to 513; sequence MFTVGCCVFAFFVGLLFVQ. Over 514-528 the chain is Extracellular; the sequence is RSGNYFVTMFDDYSA. Residues 529 to 549 form a helical membrane-spanning segment; the sequence is TLPLTVIVILENIAVAWIYGT. At 550 to 569 the chain is on the cytoplasmic side; that stretch reads KKFMQELTEMLGFQPYRFYF. Residues 570-591 form a helical membrane-spanning segment; the sequence is YMWKFVSPLCMAVLTTASIIQL. The Extracellular portion of the chain corresponds to 592–618; the sequence is GVSPPGYSAWIKEEAAERYLYFPNWAM. A helical transmembrane segment spans residues 619 to 641; the sequence is ALLITLIAVATLPIPVVFILRHF. The Cytoplasmic segment spans residues 642 to 727; sequence HLLSDGSNTL…LLASTPESEL (86 aa). Ser-665 and Ser-701 each carry phosphoserine. The disordered stretch occupies residues 680 to 727; sequence VPSEAPSPMPTHRSYLGPGSTSPLDNSNNPNGRYGSGYLLASTPESEL. Residues 698-710 show a composition bias toward polar residues; the sequence is GSTSPLDNSNNPN.

Belongs to the sodium:neurotransmitter symporter (SNF) (TC 2.A.22) family. In terms of tissue distribution, expressed in the brain. The strongest expression levels in embryonic, postnatal, and adult stages are found in both cortical and hippocampal tissues.

It is found in the cytoplasmic vesicle. The protein resides in the secretory vesicle. It localises to the synaptic vesicle membrane. The protein localises to the postsynapse. Its subcellular location is the presynapse. The enzyme catalyses L-proline(in) + Na(+)(in) = L-proline(out) + Na(+)(out). The catalysed reaction is L-leucine(in) + Na(+)(in) = L-leucine(out) + Na(+)(out). It carries out the reaction glycine(in) + Na(+)(in) = glycine(out) + Na(+)(out). It catalyses the reaction L-alanine(in) + Na(+)(in) = L-alanine(out) + Na(+)(out). The enzyme catalyses L-glutamine(in) + Na(+)(in) = L-glutamine(out) + Na(+)(out). Its function is as follows. Synaptic vesicle transporter with apparent selectivity for neutral amino acids. The transport is sodium-coupled but chloride-independent, likely driven by the proton electrochemical gradient generated by vacuolar H(+)-ATPase in an overall electrogenic mechanism. May contribute to the synaptic uptake of neurotransmitter precursors in a process coupled in part to vesicle exocytosis. This is Sodium-dependent neutral amino acid transporter SLC6A17 from Mus musculus (Mouse).